We begin with the raw amino-acid sequence, 452 residues long: CASP-like protein 4A1 (452 aa).

Basic and acidic residues predominate over residues 1 to 17; the sequence is MGLRDSLKEREDRRSSE. 3 disordered regions span residues 1–39, 71–147, and 164–283; these read MGLR…RKES, RAGP…ARSS, and AKYV…VQFR. At 1 to 305 the chain is on the cytoplasmic side; sequence MGLRDSLKER…KRRAAAMQRT (305 aa). Positions 25 to 34 are enriched in polar residues; it reads SWMTRESTTG. Composition is skewed to low complexity over residues 105 to 126 and 190 to 205; these read QAQA…TGSG and GWYS…AAPP. Residues 211–272 are compositionally biased toward pro residues; it reads DPPPAPPRRQ…TAPAPAPVPA (62 aa). The chain crosses the membrane as a helical span at residues 306–326; the sequence is ALLARGAAAGLCLAALAVLAA. Over 327–347 the chain is Extracellular; the sequence is DTRKGWARDSYSNYTQFRYSE. N339 carries an N-linked (GlcNAc...) asparagine glycan. A helical membrane pass occupies residues 348-368; sequence AVNVIGFIYSVFQFVALVELM. Topologically, residues 369-389 are cytoplasmic; the sequence is RRNKHLIPHPKRDLFDFTMDQ. Residues 390-406 traverse the membrane as a helical segment; the sequence is VLTYLLISSSSSATARV. At 407 to 423 the chain is on the extracellular side; it reads SDLIDNWGSDPFPSMAN. Residue N423 is glycosylated (N-linked (GlcNAc...) asparagine). Residues 424–444 traverse the membrane as a helical segment; the sequence is GSIAISFLAFAVFAICSLISA. Residues 445–452 are Cytoplasmic-facing; it reads YNLFRRDV.

It belongs to the Casparian strip membrane proteins (CASP) family. As to quaternary structure, homodimer and heterodimers.

The protein resides in the cell membrane. This is CASP-like protein 4A1 from Sorghum bicolor (Sorghum).